The primary structure comprises 383 residues: Alkanesulfonate monooxygenase (383 aa).

The protein belongs to the SsuD family. Homotetramer.

It catalyses the reaction an alkanesulfonate + FMNH2 + O2 = an aldehyde + FMN + sulfite + H2O + 2 H(+). Functionally, catalyzes the desulfonation of aliphatic sulfonates. The polypeptide is Alkanesulfonate monooxygenase (Erwinia pyrifoliae (strain DSM 12163 / CIP 106111 / Ep16/96)).